Reading from the N-terminus, the 533-residue chain is Solute carrier family 2, facilitated glucose transporter member 2 (533 aa).

Over 1–17 the chain is Cytoplasmic; sequence MDGKSKMQAEKHLTGTL. A helical membrane pass occupies residues 18–38; it reads VLSVFTAVLGFFQYGYSLGVI. The Extracellular segment spans residues 39–110; the sequence is NAPQKVIEAH…SPHILTMYWS (72 aa). N-linked (GlcNAc...) asparagine glycans are attached at residues N64 and N69. Residues 111–131 traverse the membrane as a helical segment; sequence LSVSMFAVGGMVSSFTVGWIG. The Cytoplasmic segment spans residues 132 to 136; it reads DRLGR. Residues 137–157 traverse the membrane as a helical segment; the sequence is VKAMLVVNVLSIAGNLLMGLA. The Extracellular portion of the chain corresponds to 158-163; it reads KMGPSH. Residues 164–184 traverse the membrane as a helical segment; sequence ILIIAGRAITGLYCGLSSGLV. At 185-199 the chain is on the cytoplasmic side; the sequence is PMYVSEVSPTALRGA. A helical membrane pass occupies residues 200 to 220; that stretch reads LGTLHQLAIVTGILISQVLGL. Q205 is a D-glucose binding site. The Extracellular portion of the chain corresponds to 221–229; sequence DFLLGNDEL. Residues 230–250 form a helical membrane-spanning segment; it reads WPLLLGLSGVAALLQFFLLLL. The Cytoplasmic portion of the chain corresponds to 251–315; the sequence is CPESPRYLYI…LFSSSKYRQA (65 aa). A helical transmembrane segment spans residues 316–336; sequence VIVALMVQISQQFSGINAIFY. D-glucose contacts are provided by residues 326–327 and N332; that span reads QQ. Residues 337–350 lie on the Extracellular side of the membrane; it reads YSTNIFQRAGVGQP. Residues 351-371 form a helical membrane-spanning segment; it reads VYATIGVGVVNTVFTVISVFL. N361 is a binding site for D-glucose. Over 372–379 the chain is Cytoplasmic; that stretch reads VEKAGRRS. A helical membrane pass occupies residues 380–400; sequence LFLAGLMGMLISAVAMTVGLV. Residues 401-413 are Extracellular-facing; the sequence is LLSQFAWMSYVSM. Residues 414-434 traverse the membrane as a helical segment; that stretch reads VAIFLFVIFFEVGPGPIPWFI. 2 residues coordinate D-glucose: E424 and W432. Residues 435-445 are Cytoplasmic-facing; it reads VAELFSQGPRP. Residues 446–466 traverse the membrane as a helical segment; sequence AAIAVAGFCNWACNFIVGMCF. Over 467–471 the chain is Extracellular; that stretch reads QYIAD. A helical transmembrane segment spans residues 472 to 492; it reads LCGPYVFVVFAVLLLVFFLFA. Residues 493–533 are Cytoplasmic-facing; that stretch reads YLKVPETKGKSFEEIAAAFRRKKLPAKSMTELEDLRGGEEA.

The protein belongs to the major facilitator superfamily. Sugar transporter (TC 2.A.1.1) family. Glucose transporter subfamily.

The protein localises to the cell membrane. It catalyses the reaction D-glucose(out) = D-glucose(in). The enzyme catalyses D-fructose(out) = D-fructose(in). The catalysed reaction is L-dehydroascorbate(out) = L-dehydroascorbate(in). It carries out the reaction D-galactose(in) = D-galactose(out). D-glucose and maltose competitively inhibit fructose transport. D-glucose, D-fructose and maltose inhibit deoxyglucose transport. Its function is as follows. Facilitative hexose transporter that mediates the transport of glucose, fructose and galactose. Likely mediates the bidirectional transfer of glucose across the plasma membrane of hepatocytes and is responsible for uptake of glucose by the beta cells. In Gallus gallus (Chicken), this protein is Solute carrier family 2, facilitated glucose transporter member 2.